A 368-amino-acid chain; its full sequence is GDSL esterase/lipase At4g16230 (368 aa).

The signal sequence occupies residues 1–24 (MSLLVFLCQIIVLSVLFFSEVCLA). The active-site Nucleophile is the serine 37. Asparagine 117 and asparagine 286 each carry an N-linked (GlcNAc...) asparagine glycan. Residues aspartate 329 and histidine 332 contribute to the active site.

Belongs to the 'GDSL' lipolytic enzyme family.

It is found in the secreted. This chain is GDSL esterase/lipase At4g16230, found in Arabidopsis thaliana (Mouse-ear cress).